Reading from the N-terminus, the 361-residue chain is Probable cytosolic iron-sulfur protein assembly protein 1 (361 aa).

WD repeat units follow at residues Ala-10–Gln-49, Thr-56–Leu-105, Gly-120–Glu-160, Asp-167–Ser-206, Gly-213–His-265, Val-280–Ile-319, and His-327–Pro-361.

It belongs to the WD repeat CIA1 family. In terms of assembly, interacts with NAR1.

The protein localises to the cytoplasm. Its subcellular location is the nucleus. Functionally, essential component of the cytosolic iron-sulfur (Fe/S) protein assembly machinery. Required for the maturation of extramitochondrial Fe/S proteins. In Scheffersomyces stipitis (strain ATCC 58785 / CBS 6054 / NBRC 10063 / NRRL Y-11545) (Yeast), this protein is Probable cytosolic iron-sulfur protein assembly protein 1.